A 131-amino-acid chain; its full sequence is D-ribose pyranase (131 aa).

The active-site Proton donor is the H20. Residues D28, H98, and 120 to 122 (YAN) contribute to the substrate site.

It belongs to the RbsD / FucU family. RbsD subfamily. In terms of assembly, homodecamer.

The protein resides in the cytoplasm. It carries out the reaction beta-D-ribopyranose = beta-D-ribofuranose. It participates in carbohydrate metabolism; D-ribose degradation; D-ribose 5-phosphate from beta-D-ribopyranose: step 1/2. Functionally, catalyzes the interconversion of beta-pyran and beta-furan forms of D-ribose. The protein is D-ribose pyranase of Clostridium botulinum (strain Eklund 17B / Type B).